The following is a 317-amino-acid chain: uncharacterized protein (317 aa).

Transmembrane regions (helical) follow at residues 18–38 (WWII…LIII), 58–78 (IIFG…GFIF), 92–112 (FLGH…WWSV), 130–150 (LFAT…AFGV), 165–185 (QPLS…KGEL), 202–222 (LAFL…LSTV), and 253–273 (LWGG…LMVN).

This sequence belongs to the CbiQ family.

The protein localises to the cell membrane. This is an uncharacterized protein from Mycoplasma pneumoniae (strain ATCC 29342 / M129 / Subtype 1) (Mycoplasmoides pneumoniae).